A 252-amino-acid chain; its full sequence is Imidazole glycerol phosphate synthase subunit HisF (252 aa).

Catalysis depends on residues Asp-11 and Asp-130.

The protein belongs to the HisA/HisF family. In terms of assembly, heterodimer of HisH and HisF.

Its subcellular location is the cytoplasm. It catalyses the reaction 5-[(5-phospho-1-deoxy-D-ribulos-1-ylimino)methylamino]-1-(5-phospho-beta-D-ribosyl)imidazole-4-carboxamide + L-glutamine = D-erythro-1-(imidazol-4-yl)glycerol 3-phosphate + 5-amino-1-(5-phospho-beta-D-ribosyl)imidazole-4-carboxamide + L-glutamate + H(+). It participates in amino-acid biosynthesis; L-histidine biosynthesis; L-histidine from 5-phospho-alpha-D-ribose 1-diphosphate: step 5/9. In terms of biological role, IGPS catalyzes the conversion of PRFAR and glutamine to IGP, AICAR and glutamate. The HisF subunit catalyzes the cyclization activity that produces IGP and AICAR from PRFAR using the ammonia provided by the HisH subunit. The polypeptide is Imidazole glycerol phosphate synthase subunit HisF (Bacillus cereus (strain ATCC 10987 / NRS 248)).